Reading from the N-terminus, the 140-residue chain is Secreted RxLR effector protein 37 (140 aa).

Positions 1–22 are cleaved as a signal peptide; it reads MTYRLPFVAVILFVTAKHVVLA. Positions 57-76 match the RxLR-dEER motif; sequence RFLRQLEKKPGVNDKRDEER.

Belongs to the RxLR effector family.

Its subcellular location is the secreted. It localises to the host nucleus. It is found in the host cytoplasm. In terms of biological role, secreted effector that completely suppresses the host cell death induced by cell death-inducing proteins. This chain is Secreted RxLR effector protein 37, found in Plasmopara viticola (Downy mildew of grapevine).